The primary structure comprises 148 residues: MTKTVYVLNGPNLNLLGTREPQVYGSQTLADVEQLCTAACARHGLALVFRQSNHEGALVDWIHEAGRLHAAGQLAGVVLNAAAYTHTSVALLDAVKGTGVPVVELHISNVHARESFRHHSYLAGAARAVMCGFGVQGYALAIDGLAQW.

Tyr24 functions as the Proton acceptor in the catalytic mechanism. 3 residues coordinate substrate: Asn80, His86, and Asp93. The Proton donor role is filled by His106. Residues 107–108 (IS) and Arg117 contribute to the substrate site.

Belongs to the type-II 3-dehydroquinase family. Homododecamer.

It catalyses the reaction 3-dehydroquinate = 3-dehydroshikimate + H2O. Its pathway is metabolic intermediate biosynthesis; chorismate biosynthesis; chorismate from D-erythrose 4-phosphate and phosphoenolpyruvate: step 3/7. Functionally, catalyzes a trans-dehydration via an enolate intermediate. The sequence is that of 3-dehydroquinate dehydratase from Acidovorax sp. (strain JS42).